A 72-amino-acid polypeptide reads, in one-letter code: Translation initiation factor IF-1 (72 aa).

The region spanning 1 to 72 (MAKEEAIEVE…TRGRITYREK (72 aa)) is the S1-like domain.

The protein belongs to the IF-1 family. As to quaternary structure, component of the 30S ribosomal translation pre-initiation complex which assembles on the 30S ribosome in the order IF-2 and IF-3, IF-1 and N-formylmethionyl-tRNA(fMet); mRNA recruitment can occur at any time during PIC assembly.

The protein resides in the cytoplasm. In terms of biological role, one of the essential components for the initiation of protein synthesis. Stabilizes the binding of IF-2 and IF-3 on the 30S subunit to which N-formylmethionyl-tRNA(fMet) subsequently binds. Helps modulate mRNA selection, yielding the 30S pre-initiation complex (PIC). Upon addition of the 50S ribosomal subunit IF-1, IF-2 and IF-3 are released leaving the mature 70S translation initiation complex. The sequence is that of Translation initiation factor IF-1 from Syntrophotalea carbinolica (strain DSM 2380 / NBRC 103641 / GraBd1) (Pelobacter carbinolicus).